The chain runs to 101 residues: NAD(P)H-quinone oxidoreductase subunit 4L, chloroplastic (101 aa).

The next 3 helical transmembrane spans lie at 2–22 (MLEH…YGLI), 32–52 (MCLE…SDFF), and 61–81 (IFSI…LAIV).

This sequence belongs to the complex I subunit 4L family. In terms of assembly, NDH is composed of at least 16 different subunits, 5 of which are encoded in the nucleus.

The protein localises to the plastid. It is found in the chloroplast thylakoid membrane. It carries out the reaction a plastoquinone + NADH + (n+1) H(+)(in) = a plastoquinol + NAD(+) + n H(+)(out). It catalyses the reaction a plastoquinone + NADPH + (n+1) H(+)(in) = a plastoquinol + NADP(+) + n H(+)(out). Its function is as follows. NDH shuttles electrons from NAD(P)H:plastoquinone, via FMN and iron-sulfur (Fe-S) centers, to quinones in the photosynthetic chain and possibly in a chloroplast respiratory chain. The immediate electron acceptor for the enzyme in this species is believed to be plastoquinone. Couples the redox reaction to proton translocation, and thus conserves the redox energy in a proton gradient. In Cicer arietinum (Chickpea), this protein is NAD(P)H-quinone oxidoreductase subunit 4L, chloroplastic.